The chain runs to 172 residues: Shikimate kinase (172 aa).

ATP is bound at residue Gly-17–Thr-22. Ser-21 lines the Mg(2+) pocket. Substrate contacts are provided by Asp-39, Arg-63, and Gly-84. Arg-122 serves as a coordination point for ATP. Arg-140 is a binding site for substrate.

This sequence belongs to the shikimate kinase family. In terms of assembly, monomer. The cofactor is Mg(2+).

It localises to the cytoplasm. The enzyme catalyses shikimate + ATP = 3-phosphoshikimate + ADP + H(+). The protein operates within metabolic intermediate biosynthesis; chorismate biosynthesis; chorismate from D-erythrose 4-phosphate and phosphoenolpyruvate: step 5/7. Its function is as follows. Catalyzes the specific phosphorylation of the 3-hydroxyl group of shikimic acid using ATP as a cosubstrate. The polypeptide is Shikimate kinase (Staphylococcus haemolyticus (strain JCSC1435)).